Reading from the N-terminus, the 630-residue chain is A-type voltage-gated potassium channel KCND2 (630 aa).

Topologically, residues 1 to 184 (MAAGVAAWLP…FENPHTSTMA (184 aa)) are cytoplasmic. Residues 2-20 (AAGVAAWLPFARAAAIGWM) are interaction with KCNIP1, KCNIP2, and other family members. Thr-38 carries the phosphothreonine modification. The interval 71–90 (ERDFFYHPETQQYFFDRDPD) is interaction with KCNIP1. Zn(2+)-binding residues include His-105, Cys-111, Cys-132, and Cys-133. The chain crosses the membrane as a helical span at residues 185-206 (LVFYYVTGFFIAVSVIANVVET). Topologically, residues 207 to 226 (VPCGSSPGHIKELPCGERYA) are extracellular. A helical transmembrane segment spans residues 227-249 (VAFFCLDTACVMIFTVEYLLRLA). Over 250–256 (AAPSRYR) the chain is Cytoplasmic. The helical transmembrane segment at 257-281 (FVRSVMSIIDVVAILPYYIGLVMTD) threads the bilayer. At 282-287 (NEDVSG) the chain is on the extracellular side. The helical; Voltage-sensor transmembrane segment at 288 to 307 (AFVTLRVFRVFRIFKFSRHS) threads the bilayer. Over 308–321 (QGLRILGYTLKSCA) the chain is Cytoplasmic. The interval 308–321 (QGLRILGYTLKSCA) is S4-S5 linker. The chain crosses the membrane as a helical span at residues 322-345 (SELGFLLFSLTMAIIIFATVMFYA). Residues 346-357 (EKGSSASKFTSI) lie on the Extracellular side of the membrane. An intramembrane region (helical) is located at residues 358 to 369 (PAAFWYTIVTMT). The K(+) site is built by Thr-370, Leu-371, Gly-372, and Tyr-373. Residues 370 to 375 (TLGYGD) carry the Selectivity filter motif. Residues 370-377 (TLGYGDMV) lie within the membrane without spanning it. Topologically, residues 378–380 (PKT) are extracellular. Residues 381–403 (IAGKIFGSICSLSGVLVIALPVP) form a helical membrane-spanning segment. Residues 404–630 (VIVSNFSRIY…GGNIVRVSAL (227 aa)) lie on the Cytoplasmic side of the membrane. A Phosphoserine modification is found at Ser-438. The tract at residues 474 to 489 (FETQHHHLLHCLEKTT) is required for dendritic targeting. The interval 474–630 (FETQHHHLLH…GGNIVRVSAL (157 aa)) is important for normal channel activation and inactivation, for interaction with KCNIP2, and probably other family members as well. Phosphoserine is present on residues Ser-548, Ser-552, Ser-572, and Ser-575. Residues 600–630 (IPTPPVTTPEGDDRPESPEYSGGNIVRVSAL) are disordered. A phosphothreonine mark is found at Thr-602 and Thr-607. Position 616 is a phosphoserine (Ser-616). Positions 627 to 630 (VSAL) match the PDZ-binding motif.

The protein belongs to the potassium channel family. D (Shal) (TC 1.A.1.2) subfamily. Kv4.2/KCND2 sub-subfamily. Homotetramer or heterotetramer with KCND1 or KCND3. Associates with the regulatory subunits KCNIP2, KCNIP3 and KCNIP4. Interacts with the regulatory subunit KCNIP1; this interaction mediates the capture of both the N- and C-terminus of KCND2, preventing N-type inactivation and stabilizing the S6 conformation, thereby accelerating closed state inactivation and recovery. In vivo, probably exists as heteromeric complex containing variable proportions of KCND1, KCND2, KCND3, KCNIP1, KCNIP2, KCNIP3, KCNIP4, DPP6 and DPP10. The tetrameric channel can associate with up to four regulatory subunits, such as KCNIP2 or KCNIP4. Interaction with four KCNIP4 chains does not reduce interaction with DPP10. Interacts with DLG4 and NCS1/FREQ. Interacts with DLG1. Probably part of a complex consisting of KCNIP1, KCNIP2 isoform 3 and KCND2. Interacts with FLNA, FLNC and DPP10. Interacts (via S1 and S2 helices) with DPP6; this interaction stabilizes the conformation of the S1-S2 helices and facilitates S4 conformational change, including S4 sliding up and down, thereby accelerating activation, inactivation, and recovery. Phosphorylation at Ser-438 in response to MAPK activation is increased in stimulated dendrites. Interaction with KCNIP2 and DPP6 propomtes phosphorylation by PKA at Ser-552. Phosphorylation at Ser-552 has no effect on interaction with KCNIP3, but is required for the regulation of channel activity by KCNIP3. Phosphorylation at Ser-552 leads to KCND2 internalization. Phosphorylated by MAPK in response to signaling via the metabotropic glutamate receptor GRM5. Phosphorylation at Ser-616 is required for the down-regulation of neuronal A-type currents in response to signaling via GRM5. In terms of tissue distribution, detected in ovary, in corpus luteum and in granulosa and theca cells in the follicle (at protein level). Highly expressed throughout the brain. Detected in amygdala, caudate nucleus, cerebellum, hippocampus, substantia nigra and thalamus. Expression is not detectable or very low in heart, kidney, liver, lung, pancreas and skeletal muscle. Not detectable in human heart atrium.

It is found in the cell membrane. The protein resides in the cell projection. The protein localises to the dendrite. It localises to the synapse. Its subcellular location is the perikaryon. It is found in the postsynaptic cell membrane. The protein resides in the dendritic spine. The protein localises to the cell junction. The catalysed reaction is K(+)(in) = K(+)(out). Functionally, voltage-gated potassium channel that mediates transmembrane potassium transport in excitable membranes, primarily in the brain. Mediates the major part of the dendritic A-type current I(SA) in brain neurons. This current is activated at membrane potentials that are below the threshold for action potentials. It regulates neuronal excitability, prolongs the latency before the first spike in a series of action potentials, regulates the frequency of repetitive action potential firing, shortens the duration of action potentials and regulates the back-propagation of action potentials from the neuronal cell body to the dendrites. Contributes to the regulation of the circadian rhythm of action potential firing in suprachiasmatic nucleus neurons, which regulates the circadian rhythm of locomotor activity. Functions downstream of the metabotropic glutamate receptor GRM5 and plays a role in neuronal excitability and in nociception mediated by activation of GRM5. Mediates the transient outward current I(to) in rodent heart left ventricle apex cells, but not in human heart, where this current is mediated by another family member. Forms tetrameric potassium-selective channels through which potassium ions pass in accordance with their electrochemical gradient. The channel alternates between opened and closed conformations in response to the voltage difference across the membrane. Can form functional homotetrameric channels and heterotetrameric channels that contain variable proportions of KCND2 and KCND3; channel properties depend on the type of pore-forming alpha subunits that are part of the channel. In vivo, membranes probably contain a mixture of heteromeric potassium channel complexes. Interaction with specific isoforms of the regulatory subunits KCNIP1, KCNIP2, KCNIP3 or KCNIP4 strongly increases expression at the cell surface and thereby increases channel activity; it modulates the kinetics of channel activation and inactivation, shifts the threshold for channel activation to more negative voltage values, shifts the threshold for inactivation to less negative voltages and accelerates recovery after inactivation. Likewise, interaction with DPP6 or DPP10 promotes expression at the cell membrane and regulates both channel characteristics and activity. Upon depolarization, the channel goes from a resting closed state (C state) to an activated but non-conducting state (C* state), from there, the channel may either inactivate (I state) or open (O state). This Homo sapiens (Human) protein is A-type voltage-gated potassium channel KCND2.